The sequence spans 317 residues: WD repeat-containing protein 82 (317 aa).

6 WD repeats span residues glutamate 21–threonine 60, glycine 107–leucine 146, histidine 148–phenylalanine 186, glutamate 194–threonine 233, proline 238–valine 278, and aspartate 282–leucine 317.

The protein belongs to the WD repeat SWD2 family. In terms of assembly, component of the SET1 complex, composed at least of the catalytic subunit Set1, wds/WDR5, Wdr82, Rbbp5, ash2, Cfp1/CXXC1, hcf and Dpy-30L1. Interacts with male-specific lethal (MSL) histone acetyltransferase complex at least composed of mof, msl-1, msl-2 and msl-3. Interacts with su(sable).

Its subcellular location is the nucleus. In terms of biological role, component of the SET1 complex that specifically di- and trimethylates 'Lys-4' of histone H3. Together with su(sable), part of a transcription termination checkpoint that promotes transcription termination of aberrant RNAs and their subsequent degradation by the nuclear exosome. The polypeptide is WD repeat-containing protein 82 (Drosophila melanogaster (Fruit fly)).